The sequence spans 235 residues: Uridylate kinase (235 aa).

Position 8–11 (8–11 (KFSG)) interacts with ATP. The involved in allosteric activation by GTP stretch occupies residues 16–21 (GAEGYG). Gly50 is a UMP binding site. ATP is bound by residues Gly51 and Arg55. Residues Asp71 and 132-139 (TGNPYFTT) contribute to the UMP site. Residues Thr159, Tyr165, and Asp168 each contribute to the ATP site.

Belongs to the UMP kinase family. As to quaternary structure, homohexamer.

It is found in the cytoplasm. The enzyme catalyses UMP + ATP = UDP + ADP. The protein operates within pyrimidine metabolism; CTP biosynthesis via de novo pathway; UDP from UMP (UMPK route): step 1/1. Its activity is regulated as follows. Allosterically activated by GTP. Inhibited by UTP. In terms of biological role, catalyzes the reversible phosphorylation of UMP to UDP. The chain is Uridylate kinase from Aliarcobacter butzleri (strain RM4018) (Arcobacter butzleri).